A 93-amino-acid chain; its full sequence is Microcin N immunity protein (93 aa).

Transmembrane regions (helical) follow at residues 3 to 23, 36 to 56, and 68 to 88; these read FLNF…FIVW, LSII…NYKI, and LFCF…YFIL.

Belongs to the MceB microcin immunity protein family.

It localises to the cell inner membrane. Probably able to protect the producing cell against microcin N (microcin 24). The polypeptide is Microcin N immunity protein (Escherichia coli).